Consider the following 259-residue polypeptide: Tonin (259 aa).

The signal sequence occupies residues 1-18 (MWLQILSLVLSVGRIDAA). A propeptide spans 19–24 (PPGQSR) (activation peptide). Positions 25 to 256 (IVGGYKCEKN…FTSWIKKVMK (232 aa)) constitute a Peptidase S1 domain. Cystine bridges form between Cys-31–Cys-171, Cys-48–Cys-64, Cys-150–Cys-217, Cys-182–Cys-196, and Cys-207–Cys-232. Residue His-63 is the Charge relay system of the active site. Residue His-63 participates in Zn(2+) binding. Residue Asn-106 is glycosylated (N-linked (GlcNAc...) asparagine). Zn(2+) contacts are provided by His-113 and His-115. Asp-118 acts as the Charge relay system in catalysis. The N-linked (GlcNAc...) asparagine glycan is linked to Asn-189. Residue Ser-211 is the Charge relay system of the active site.

This sequence belongs to the peptidase S1 family. Kallikrein subfamily. Monomer. Requires Zn(2+) as cofactor. Found in submaxillary gland.

The catalysed reaction is Preferential cleavage of Arg-|-Xaa bonds in small molecule substrates. Highly selective action to release kallidin (lysyl-bradykinin) from kininogen involves hydrolysis of Met-|-Xaa or Leu-|-Xaa.. This protein has both trypsin- and chymotrypsin-like activities, being able to release angiotensin II from angiotensin I or angiotensinogen. The protein is Tonin (Klk2) of Rattus norvegicus (Rat).